The following is a 345-amino-acid chain: Adenine deaminase (345 aa).

Zn(2+) contacts are provided by His24, His26, and His204. The active-site Proton donor is the Glu207. Asp285 provides a ligand contact to Zn(2+). Residue Asp286 participates in substrate binding.

This sequence belongs to the metallo-dependent hydrolases superfamily. Adenosine and AMP deaminases family. Adenine deaminase type 2 subfamily. Zn(2+) is required as a cofactor.

It catalyses the reaction adenine + H2O + H(+) = hypoxanthine + NH4(+). Functionally, catalyzes the hydrolytic deamination of adenine to hypoxanthine. Plays an important role in the purine salvage pathway and in nitrogen catabolism. This Albidiferax ferrireducens (strain ATCC BAA-621 / DSM 15236 / T118) (Rhodoferax ferrireducens) protein is Adenine deaminase.